The sequence spans 178 residues: uncharacterized protein (178 aa).

Positions 152–178 are disordered; that stretch reads KKLKGAEPKEHQAPNFEPPTEIFPESN.

The protein belongs to the EUO family.

This is an uncharacterized protein from Chlamydia pneumoniae (Chlamydophila pneumoniae).